Consider the following 740-residue polypeptide: DNA-directed RNA polymerase subunit beta' (740 aa).

Zn(2+) is bound by residues Cys65, Cys67, Cys103, and Cys106. Mg(2+)-binding residues include Asp539, Asp541, and Asp543.

Belongs to the RNA polymerase beta' chain family. RpoC1 subfamily. As to quaternary structure, in plastids the minimal PEP RNA polymerase catalytic core is composed of four subunits: alpha, beta, beta', and beta''. When a (nuclear-encoded) sigma factor is associated with the core the holoenzyme is formed, which can initiate transcription. Mg(2+) serves as cofactor. Zn(2+) is required as a cofactor.

Its subcellular location is the plastid. The protein localises to the chloroplast. The catalysed reaction is RNA(n) + a ribonucleoside 5'-triphosphate = RNA(n+1) + diphosphate. DNA-dependent RNA polymerase catalyzes the transcription of DNA into RNA using the four ribonucleoside triphosphates as substrates. The chain is DNA-directed RNA polymerase subunit beta' from Ostreococcus tauri.